Reading from the N-terminus, the 968-residue chain is Isoleucine--tRNA ligase (968 aa).

The 'HIGH' region motif lies at 68–78; sequence PYANGALHMGH. An L-isoleucyl-5'-AMP-binding site is contributed by Glu584. Positions 625 to 629 match the 'KMSKS' region motif; sequence KMSKS. Lys628 is an ATP binding site. Residues Cys938, Cys941, Cys958, and Cys961 each contribute to the Zn(2+) site.

It belongs to the class-I aminoacyl-tRNA synthetase family. IleS type 1 subfamily. Monomer. Zn(2+) serves as cofactor.

The protein localises to the cytoplasm. The catalysed reaction is tRNA(Ile) + L-isoleucine + ATP = L-isoleucyl-tRNA(Ile) + AMP + diphosphate. Catalyzes the attachment of isoleucine to tRNA(Ile). As IleRS can inadvertently accommodate and process structurally similar amino acids such as valine, to avoid such errors it has two additional distinct tRNA(Ile)-dependent editing activities. One activity is designated as 'pretransfer' editing and involves the hydrolysis of activated Val-AMP. The other activity is designated 'posttransfer' editing and involves deacylation of mischarged Val-tRNA(Ile). The sequence is that of Isoleucine--tRNA ligase from Synechococcus sp. (strain CC9311).